Reading from the N-terminus, the 368-residue chain is Aminomethyltransferase (368 aa).

This sequence belongs to the GcvT family. In terms of assembly, the glycine cleavage system is composed of four proteins: P, T, L and H.

The catalysed reaction is N(6)-[(R)-S(8)-aminomethyldihydrolipoyl]-L-lysyl-[protein] + (6S)-5,6,7,8-tetrahydrofolate = N(6)-[(R)-dihydrolipoyl]-L-lysyl-[protein] + (6R)-5,10-methylene-5,6,7,8-tetrahydrofolate + NH4(+). Its function is as follows. The glycine cleavage system catalyzes the degradation of glycine. This chain is Aminomethyltransferase, found in Xylella fastidiosa (strain 9a5c).